Reading from the N-terminus, the 811-residue chain is DEAD-box ATP-dependent RNA helicase 48 (811 aa).

Disordered stretches follow at residues 1-32 (MGGGPRTFPGGLSKWQHKRMHEKLARHKERGL) and 93-138 (DDGP…EPRL). Basic residues predominate over residues 15–29 (WQHKRMHEKLARHKE). 2 stretches are compositionally biased toward basic and acidic residues: residues 95–104 (GPIHRADRPR) and 117–138 (GDRRKLDSTKQELPRGGKEPRL). Residues 286 to 333 (RNCDMKKERRALKSYEEENNDLAGSFRELREEIKNREVLGAERRRYES) adopt a coiled-coil conformation. A Q motif motif is present at residues 342–370 (KRFEECGISPLTVKALTDAGYVQTTVVQE). In terms of domain architecture, Helicase ATP-binding spans 373–556 (LPMCLEGKDV…QLVLKRDHVF (184 aa)). 386-393 (AKTGTGKS) is a binding site for ATP. A DEAD box motif is present at residues 504–507 (DEAD). Residues 570 to 740 (KVEQLYLVMP…EMKRKVDGSI (171 aa)) form the Helicase C-terminal domain.

This sequence belongs to the DEAD box helicase family.

The enzyme catalyses ATP + H2O = ADP + phosphate + H(+). The chain is DEAD-box ATP-dependent RNA helicase 48 from Oryza sativa subsp. japonica (Rice).